An 80-amino-acid polypeptide reads, in one-letter code: MEVIVVIVVIVVVIAIVIVIDSNSNSNSNNSSDSSNESNNSDSSKNGGSDIYQFSSSNKPFLHNFSNNNPNYNINAYFRI.

A signal peptide spans 1 to 15 (MEVIVVIVVIVVVIA). Positions 23–44 (NSNSNSNNSSDSSNESNNSDSS) are enriched in low complexity. The tract at residues 23-52 (NSNSNSNNSSDSSNESNNSDSSKNGGSDIY) is disordered. N-linked (GlcNAc...) asparagine glycans are attached at residues Asn-29, Asn-30, Asn-36, Asn-39, and Asn-64.

The protein resides in the secreted. This is an uncharacterized protein from Dictyostelium discoideum (Social amoeba).